The sequence spans 673 residues: F420-dependent formate dehydrogenase subunit alpha (673 aa).

Residues 3 to 59 (FKIVNTICPYCGVGCGLGLVVKDGRVIGIHPNKRHPINEGKLCAKGNYCYQFIHSKD) form the 4Fe-4S Mo/W bis-MGD-type domain. [4Fe-4S] cluster-binding residues include C10, C13, C17, and C45. Residue U131 is a non-standard amino acid, selenocysteine.

Belongs to the prokaryotic molybdopterin-containing oxidoreductase family. In terms of assembly, dimer of an alpha (FdhA) and a beta (FdhB) subunit. It depends on [4Fe-4S] cluster as a cofactor. Requires Mo-bis(molybdopterin guanine dinucleotide) as cofactor. Zn(2+) serves as cofactor.

The catalysed reaction is oxidized coenzyme F420-(gamma-L-Glu)(n) + formate + 2 H(+) = reduced coenzyme F420-(gamma-L-Glu)(n) + CO2. In terms of biological role, catalyzes the oxidation of formate to carbon dioxide, with coenzyme F420 as the electron acceptor. The protein is F420-dependent formate dehydrogenase subunit alpha (fdhA) of Methanocaldococcus jannaschii (strain ATCC 43067 / DSM 2661 / JAL-1 / JCM 10045 / NBRC 100440) (Methanococcus jannaschii).